The sequence spans 226 residues: Probable septum site-determining protein MinC (226 aa).

It belongs to the MinC family. In terms of assembly, interacts with MinD and FtsZ.

Cell division inhibitor that blocks the formation of polar Z ring septums. Rapidly oscillates between the poles of the cell to destabilize FtsZ filaments that have formed before they mature into polar Z rings. Prevents FtsZ polymerization. This is Probable septum site-determining protein MinC from Bacillus velezensis (strain DSM 23117 / BGSC 10A6 / LMG 26770 / FZB42) (Bacillus amyloliquefaciens subsp. plantarum).